Consider the following 91-residue polypeptide: Large ribosomal subunit protein eL31 (91 aa).

The protein belongs to the eukaryotic ribosomal protein eL31 family.

The protein is Large ribosomal subunit protein eL31 of Pyrobaculum calidifontis (strain DSM 21063 / JCM 11548 / VA1).